Here is a 119-residue protein sequence, read N- to C-terminus: ATP-dependent Clp protease adapter protein ClpS (119 aa).

A disordered region spans residues 1 to 33; it reads MATRIPKTPSTPPAQKPAGDDGDSVVLERRPQK.

This sequence belongs to the ClpS family. In terms of assembly, binds to the N-terminal domain of the chaperone ClpA.

Involved in the modulation of the specificity of the ClpAP-mediated ATP-dependent protein degradation. The sequence is that of ATP-dependent Clp protease adapter protein ClpS from Variovorax paradoxus (strain S110).